Here is a 352-residue protein sequence, read N- to C-terminus: Ion-translocating oxidoreductase complex subunit D (352 aa).

Helical transmembrane passes span 20 to 40, 42 to 62, 78 to 109, 123 to 143, and 148 to 168; these read IMLLVLLAAVPGIAAQLWFFG, GTLVQILLASVSALLAEALVL, ALLTGLLLAVSIPPLAPWWMVVLGTVFAVIIA, PAMIGYVVLLISFPVQMTSWL, and IAVNIPGFIDAIQVIFSGHTA. Residue Thr-187 is modified to FMN phosphoryl threonine. 4 consecutive transmembrane segments (helical) span residues 214–234, 242–262, 267–287, and 301–318; these read ILAGAGWQWVNLAWLAGGVWL, WHIPLSFLVTLALCATLGWLF, LAAPQIHLLSGATMLGAFFIL, and LMFGALAGLLVWLIRSFG.

The protein belongs to the NqrB/RnfD family. In terms of assembly, the complex is composed of six subunits: RsxA, RsxB, RsxC, RsxD, RsxE and RsxG. It depends on FMN as a cofactor.

The protein localises to the cell inner membrane. Its function is as follows. Part of a membrane-bound complex that couples electron transfer with translocation of ions across the membrane. Required to maintain the reduced state of SoxR. The sequence is that of Ion-translocating oxidoreductase complex subunit D from Shigella flexneri serotype 5b (strain 8401).